The primary structure comprises 218 residues: MEEGSRSQSPREELELSMLDGPQEELTPLNNDLRIQPNSAEDPSPAQVGKESPWSPCNKSVVGKCKLWMVIVTIFLCFIIVIVISLCLVGVTYIDEDENEILELSSNKTFFITLKIPEECANEEGLHHLLTERLTDTYRQSPSLSRFFTSADILDFSVENATVTYHLQFGVPSEDDDFMKYMMSEELVLGIMRQSFHDKNISTCESLGLDPESLLLYE.

Residues 1 to 54 (MEEGSRSQSPREELELSMLDGPQEELTPLNNDLRIQPNSAEDPSPAQVGKESPW) are disordered. The helical transmembrane segment at 66–86 (KLWMVIVTIFLCFIIVIVISL) threads the bilayer.

The protein localises to the endoplasmic reticulum membrane. The polypeptide is TPA-induced transmembrane protein homolog (Mus musculus (Mouse)).